We begin with the raw amino-acid sequence, 792 residues long: Chloride channel protein CLC-d (792 aa).

A run of 12 helical transmembrane segments spans residues 78-98, 119-139, 170-190, 195-215, 237-257, 267-287, 320-340, 361-381, 451-471, 474-494, 508-528, and 529-549; these read FFSL…NLSV, AGFI…AYII, RTLI…LALG, LVHT…TKYH, GCAA…LFAL, QLMW…RTAM, LLPM…FNQL, IIEA…LPLL, LLTF…TAVP, QFVP…MFVV, ALLG…SLCV, and IMVE…VLLI. CBS domains follow at residues 592-652 and 704-761; these read QSQK…KVDF and LNPS…SSAV. Residues 731–751 form a helical membrane-spanning segment; that stretch reads HLFVVPRPSRVIGLITRKDLL.

Belongs to the chloride channel (TC 2.A.49) family. In terms of assembly, homodimer. In terms of tissue distribution, broadly expressed in the plant, but predominantly in the silique.

Its subcellular location is the membrane. In terms of biological role, voltage-gated chloride channel. This is Chloride channel protein CLC-d (CLC-D) from Arabidopsis thaliana (Mouse-ear cress).